Reading from the N-terminus, the 1038-residue chain is Translation initiation factor IF-2 (1038 aa).

Residues 48–426 (DALQGPGGNA…RQRRQEYEAM (379 aa)) form a disordered region. A compositionally biased stretch (low complexity) spans 58 to 87 (GKSAAKPGAPRKAAPAKPAAPSPAAAARPA). Residues 88–99 (APKPGAPAPKPA) show a composition bias toward pro residues. Residues 100 to 114 (EAPSSTPAAPSAPSA) are compositionally biased toward low complexity. Residues 115–125 (GPRPGPKPAPK) show a composition bias toward pro residues. The span at 126–141 (AAPVTPVPAAEFSAPA) shows a compositional bias: low complexity. The segment covering 142-153 (PAQPAAPQPQAP) has biased composition (pro residues). Positions 177-199 (DGGRDGGQRDGGRGGERGGDRPA) are enriched in basic and acidic residues. Residues 200 to 219 (RPAGQGAPRPGGARPAGPRP) are compositionally biased toward low complexity. Residues 261–277 (SGPGGAPRPQGGQGQGG) are compositionally biased toward gly residues. Over residues 299–315 (GNRPNPGMMPQRPAAGP) the composition is skewed to low complexity. Residues 319–406 (PGGGGRGPGG…GTQGAFGRPG (88 aa)) are compositionally biased toward gly residues. Residues 410-419 (RRGRKSKRQR) show a composition bias toward basic residues. Residues 531-703 (SRPPVVTVMG…VVLTADASLD (173 aa)) form the tr-type G domain. The G1 stretch occupies residues 540–547 (GHVDHGKT). 540–547 (GHVDHGKT) serves as a coordination point for GTP. The segment at 565 to 569 (GITQH) is G2. A G3 region spans residues 590-593 (DTPG). GTP is bound by residues 590 to 594 (DTPGH) and 644 to 647 (NKID). A G4 region spans residues 644 to 647 (NKID). A G5 region spans residues 680-682 (SAK).

Belongs to the TRAFAC class translation factor GTPase superfamily. Classic translation factor GTPase family. IF-2 subfamily.

It is found in the cytoplasm. In terms of biological role, one of the essential components for the initiation of protein synthesis. Protects formylmethionyl-tRNA from spontaneous hydrolysis and promotes its binding to the 30S ribosomal subunits. Also involved in the hydrolysis of GTP during the formation of the 70S ribosomal complex. The sequence is that of Translation initiation factor IF-2 from Streptomyces griseus subsp. griseus (strain JCM 4626 / CBS 651.72 / NBRC 13350 / KCC S-0626 / ISP 5235).